The sequence spans 259 residues: UPF0246 protein ABBFA_001173 (259 aa).

It belongs to the UPF0246 family.

This is UPF0246 protein ABBFA_001173 from Acinetobacter baumannii (strain AB307-0294).